The sequence spans 483 residues: ATP synthase subunit beta (483 aa).

167–174 contacts ATP; the sequence is GGAGVGKT.

Belongs to the ATPase alpha/beta chains family. In terms of assembly, F-type ATPases have 2 components, CF(1) - the catalytic core - and CF(0) - the membrane proton channel. CF(1) has five subunits: alpha(3), beta(3), gamma(1), delta(1), epsilon(1). CF(0) has three main subunits: a(1), b(2) and c(9-12). The alpha and beta chains form an alternating ring which encloses part of the gamma chain. CF(1) is attached to CF(0) by a central stalk formed by the gamma and epsilon chains, while a peripheral stalk is formed by the delta and b chains.

It is found in the cell membrane. The catalysed reaction is ATP + H2O + 4 H(+)(in) = ADP + phosphate + 5 H(+)(out). Functionally, produces ATP from ADP in the presence of a proton gradient across the membrane. The catalytic sites are hosted primarily by the beta subunits. The polypeptide is ATP synthase subunit beta (Paenarthrobacter aurescens (strain TC1)).